The sequence spans 314 residues: L-lactate dehydrogenase 1 (314 aa).

Residues valine 16, aspartate 37, lysine 42, tyrosine 68, and 82 to 83 each bind NAD(+); that span reads GL. Substrate is bound by residues glutamine 85, arginine 91, and 123–126; that span reads NPVD. NAD(+)-binding positions include 121 to 123 and serine 146; that span reads ATN. 151–154 serves as a coordination point for substrate; that stretch reads DSAR. Residues arginine 156 and histidine 171 each contribute to the beta-D-fructose 1,6-bisphosphate site. Catalysis depends on histidine 178, which acts as the Proton acceptor. Tyrosine 223 carries the phosphotyrosine modification. Residue threonine 232 participates in substrate binding.

This sequence belongs to the LDH/MDH superfamily. LDH family. As to quaternary structure, homotetramer.

The protein resides in the cytoplasm. The enzyme catalyses (S)-lactate + NAD(+) = pyruvate + NADH + H(+). The protein operates within fermentation; pyruvate fermentation to lactate; (S)-lactate from pyruvate: step 1/1. Allosterically activated by fructose 1,6-bisphosphate (FBP). In terms of biological role, catalyzes the conversion of lactate to pyruvate. This chain is L-lactate dehydrogenase 1, found in Bacillus anthracis.